Here is a 237-residue protein sequence, read N- to C-terminus: Ribosomal RNA small subunit methyltransferase G (237 aa).

A disordered region spans residues 1–25; that stretch reads MASRHSPQTAAQPDAADKAQALRLT. Over residues 7–21 the composition is skewed to low complexity; the sequence is PQTAAQPDAADKAQA. Residues Gly-85, Phe-90, and Arg-155 each coordinate S-adenosyl-L-methionine.

This sequence belongs to the methyltransferase superfamily. RNA methyltransferase RsmG family.

The protein resides in the cytoplasm. The catalysed reaction is guanosine(527) in 16S rRNA + S-adenosyl-L-methionine = N(7)-methylguanosine(527) in 16S rRNA + S-adenosyl-L-homocysteine. In terms of biological role, specifically methylates the N7 position of guanine in position 527 of 16S rRNA. The sequence is that of Ribosomal RNA small subunit methyltransferase G from Rhodopseudomonas palustris (strain HaA2).